Reading from the N-terminus, the 285-residue chain is Bifunctional protein FolD (285 aa).

Residues 166–168, serine 191, and isoleucine 232 contribute to the NADP(+) site; that span reads GAS.

The protein belongs to the tetrahydrofolate dehydrogenase/cyclohydrolase family. In terms of assembly, homodimer.

The enzyme catalyses (6R)-5,10-methylene-5,6,7,8-tetrahydrofolate + NADP(+) = (6R)-5,10-methenyltetrahydrofolate + NADPH. The catalysed reaction is (6R)-5,10-methenyltetrahydrofolate + H2O = (6R)-10-formyltetrahydrofolate + H(+). It functions in the pathway one-carbon metabolism; tetrahydrofolate interconversion. In terms of biological role, catalyzes the oxidation of 5,10-methylenetetrahydrofolate to 5,10-methenyltetrahydrofolate and then the hydrolysis of 5,10-methenyltetrahydrofolate to 10-formyltetrahydrofolate. This is Bifunctional protein FolD from Actinobacillus pleuropneumoniae serotype 7 (strain AP76).